Here is a 158-residue protein sequence, read N- to C-terminus: Small ribosomal subunit protein uS7 (158 aa).

Belongs to the universal ribosomal protein uS7 family. In terms of assembly, part of the 30S ribosomal subunit. Contacts proteins S9 and S11.

Its function is as follows. One of the primary rRNA binding proteins, it binds directly to 16S rRNA where it nucleates assembly of the head domain of the 30S subunit. Is located at the subunit interface close to the decoding center, probably blocks exit of the E-site tRNA. The protein is Small ribosomal subunit protein uS7 of Gluconobacter oxydans (strain 621H) (Gluconobacter suboxydans).